Here is a 142-residue protein sequence, read N- to C-terminus: Small ribosomal subunit protein uS12 (142 aa).

Belongs to the universal ribosomal protein uS12 family. As to quaternary structure, part of the 30S ribosomal subunit.

With S4 and S5 plays an important role in translational accuracy. Located at the interface of the 30S and 50S subunits. The sequence is that of Small ribosomal subunit protein uS12 from Methanoregula boonei (strain DSM 21154 / JCM 14090 / 6A8).